The chain runs to 85 residues: Small ribosomal subunit protein bS18 (85 aa).

Belongs to the bacterial ribosomal protein bS18 family. In terms of assembly, part of the 30S ribosomal subunit. Forms a tight heterodimer with protein bS6.

Functionally, binds as a heterodimer with protein bS6 to the central domain of the 16S rRNA, where it helps stabilize the platform of the 30S subunit. The protein is Small ribosomal subunit protein bS18 of Hyphomonas neptunium (strain ATCC 15444).